A 167-amino-acid chain; its full sequence is MITDILAMNLQVVFCGINPGLSTAHHGYHFANPSNRFWKVIHHVGFTERLLTPAEEQHLLDTGCGITMLVERPTVEATELGRDELLQGGNAIVEKMERYQPRALAVLGKQAFSQAFGIKKVSWGRQSLNIGETQVWVLPNPSGLNRATLESLVASYQELHQALQDKA.

This sequence belongs to the uracil-DNA glycosylase (UDG) superfamily. TDG/mug family. In terms of assembly, binds DNA as a monomer.

It localises to the cytoplasm. It carries out the reaction Specifically hydrolyzes mismatched double-stranded DNA and polynucleotides, releasing free uracil.. Its function is as follows. Excises ethenocytosine and uracil, which can arise by alkylation or deamination of cytosine, respectively, from the corresponding mispairs with guanine in ds-DNA. It is capable of hydrolyzing the carbon-nitrogen bond between the sugar-phosphate backbone of the DNA and the mispaired base. The complementary strand guanine functions in substrate recognition. Required for DNA damage lesion repair in stationary-phase cells. The protein is G/U mismatch-specific DNA glycosylase of Pectobacterium carotovorum subsp. carotovorum (strain PC1).